Reading from the N-terminus, the 211-residue chain is Pyridoxine/pyridoxamine 5'-phosphate oxidase (211 aa).

Residues R7–Y10 and K65 each bind substrate. Residues R60–K65, Y75–T76, R81, K82, and Q104 contribute to the FMN site. Y122, R126, and S130 together coordinate substrate. FMN is bound by residues Q139–S140 and W184. A substrate-binding site is contributed by R190–H192. R194 serves as a coordination point for FMN.

It belongs to the pyridoxamine 5'-phosphate oxidase family. Homodimer. FMN serves as cofactor.

It carries out the reaction pyridoxamine 5'-phosphate + O2 + H2O = pyridoxal 5'-phosphate + H2O2 + NH4(+). The catalysed reaction is pyridoxine 5'-phosphate + O2 = pyridoxal 5'-phosphate + H2O2. Its pathway is cofactor metabolism; pyridoxal 5'-phosphate salvage; pyridoxal 5'-phosphate from pyridoxamine 5'-phosphate: step 1/1. The protein operates within cofactor metabolism; pyridoxal 5'-phosphate salvage; pyridoxal 5'-phosphate from pyridoxine 5'-phosphate: step 1/1. In terms of biological role, catalyzes the oxidation of either pyridoxine 5'-phosphate (PNP) or pyridoxamine 5'-phosphate (PMP) into pyridoxal 5'-phosphate (PLP). The chain is Pyridoxine/pyridoxamine 5'-phosphate oxidase from Aeromonas hydrophila subsp. hydrophila (strain ATCC 7966 / DSM 30187 / BCRC 13018 / CCUG 14551 / JCM 1027 / KCTC 2358 / NCIMB 9240 / NCTC 8049).